Consider the following 181-residue polypeptide: PLAT domain-containing protein 1 (181 aa).

An N-terminal signal peptide occupies residues 1-14 (MARRDVLLPFLLLL). The residue at position 15 (Ala-15) is an N-acetylalanine. Residues 29–156 (CVYTFYLRTG…SPYELTAVRN (128 aa)) enclose the PLAT domain.

In terms of tissue distribution, expressed in root tips, pericycle cells, lateral root primordia, stomata, leaf vasculature, hydathodes and floral organs.

Its subcellular location is the endoplasmic reticulum. The protein resides in the plastid. It localises to the chloroplast. The protein localises to the plastoglobule. Functionally, positive regulator of abiotic stress tolerance involved in the regulation of plant growth. May be a downstream target of the abscisic acid (ABA) signaling pathway. This is PLAT domain-containing protein 1 from Arabidopsis thaliana (Mouse-ear cress).